Reading from the N-terminus, the 482-residue chain is Long chain base biosynthesis protein 1c (482 aa).

Residues Phe33 to Phe53 form a helical membrane-spanning segment.

It belongs to the class-II pyridoxal-phosphate-dependent aminotransferase family. Heterodimer with LCB2. Component of the serine palmitoyltransferase (SPT) complex, composed of LCB1 and LCB2. The cofactor is pyridoxal 5'-phosphate.

It localises to the endoplasmic reticulum membrane. It catalyses the reaction L-serine + hexadecanoyl-CoA + H(+) = 3-oxosphinganine + CO2 + CoA. It functions in the pathway lipid metabolism; sphingolipid metabolism. In terms of biological role, serine palmitoyltransferase (SPT). The heterodimer formed with LCB2 constitutes the catalytic core. The protein is Long chain base biosynthesis protein 1c of Oryza sativa subsp. japonica (Rice).